Consider the following 211-residue polypeptide: MTSQRTRERLIQRLYEEGVSNASVLEVIRRTPRHLFVDEALAHRAYEDTALPIGNNQTISQPYMVARMSELLLEAGPLDKVLEIGTGSGYQTAVLSQLVERVFSVERIKVLQDRAKERLIELNLRNVVFRWGDGWEGWPALAPYNGIIVTAVATDVPQALLDQLAPGGRMVIPVGSGEVQQLMLIVREENGFSRHVLGAVRFVPLLNGPLA.

Residue serine 60 is part of the active site.

This sequence belongs to the methyltransferase superfamily. L-isoaspartyl/D-aspartyl protein methyltransferase family.

It is found in the cytoplasm. It catalyses the reaction [protein]-L-isoaspartate + S-adenosyl-L-methionine = [protein]-L-isoaspartate alpha-methyl ester + S-adenosyl-L-homocysteine. Functionally, catalyzes the methyl esterification of L-isoaspartyl residues in peptides and proteins that result from spontaneous decomposition of normal L-aspartyl and L-asparaginyl residues. It plays a role in the repair and/or degradation of damaged proteins. In Pseudomonas fluorescens (strain Pf0-1), this protein is Protein-L-isoaspartate O-methyltransferase.